The primary structure comprises 329 residues: Beta-ketoacyl-[acyl-carrier-protein] synthase III (329 aa).

Catalysis depends on residues C114 and H255. The interval 256–260 (QANQR) is ACP-binding. Residue N285 is part of the active site.

This sequence belongs to the thiolase-like superfamily. FabH family. Homodimer.

The protein resides in the cytoplasm. It catalyses the reaction malonyl-[ACP] + acetyl-CoA + H(+) = 3-oxobutanoyl-[ACP] + CO2 + CoA. It functions in the pathway lipid metabolism; fatty acid biosynthesis. Functionally, catalyzes the condensation reaction of fatty acid synthesis by the addition to an acyl acceptor of two carbons from malonyl-ACP. Catalyzes the first condensation reaction which initiates fatty acid synthesis and may therefore play a role in governing the total rate of fatty acid production. Possesses both acetoacetyl-ACP synthase and acetyl transacylase activities. Its substrate specificity determines the biosynthesis of branched-chain and/or straight-chain of fatty acids. The sequence is that of Beta-ketoacyl-[acyl-carrier-protein] synthase III from Thermosynechococcus vestitus (strain NIES-2133 / IAM M-273 / BP-1).